Reading from the N-terminus, the 367-residue chain is Chorismate synthase (367 aa).

NADP(+) is bound by residues R48 and R54. Residues 125–127 (RSS), 238–239 (NA), G278, 293–297 (KPTSS), and R319 each bind FMN.

The protein belongs to the chorismate synthase family. Homotetramer. It depends on FMNH2 as a cofactor.

The enzyme catalyses 5-O-(1-carboxyvinyl)-3-phosphoshikimate = chorismate + phosphate. It functions in the pathway metabolic intermediate biosynthesis; chorismate biosynthesis; chorismate from D-erythrose 4-phosphate and phosphoenolpyruvate: step 7/7. Catalyzes the anti-1,4-elimination of the C-3 phosphate and the C-6 proR hydrogen from 5-enolpyruvylshikimate-3-phosphate (EPSP) to yield chorismate, which is the branch point compound that serves as the starting substrate for the three terminal pathways of aromatic amino acid biosynthesis. This reaction introduces a second double bond into the aromatic ring system. The polypeptide is Chorismate synthase (Stenotrophomonas maltophilia (strain R551-3)).